A 187-amino-acid polypeptide reads, in one-letter code: Crossover junction endodeoxyribonuclease RuvC (187 aa).

Residues aspartate 7, glutamate 67, and aspartate 140 contribute to the active site. Residues aspartate 7, glutamate 67, and aspartate 140 each contribute to the Mg(2+) site.

This sequence belongs to the RuvC family. Homodimer which binds Holliday junction (HJ) DNA. The HJ becomes 2-fold symmetrical on binding to RuvC with unstacked arms; it has a different conformation from HJ DNA in complex with RuvA. In the full resolvosome a probable DNA-RuvA(4)-RuvB(12)-RuvC(2) complex forms which resolves the HJ. Requires Mg(2+) as cofactor.

The protein localises to the cytoplasm. The catalysed reaction is Endonucleolytic cleavage at a junction such as a reciprocal single-stranded crossover between two homologous DNA duplexes (Holliday junction).. Functionally, the RuvA-RuvB-RuvC complex processes Holliday junction (HJ) DNA during genetic recombination and DNA repair. Endonuclease that resolves HJ intermediates. Cleaves cruciform DNA by making single-stranded nicks across the HJ at symmetrical positions within the homologous arms, yielding a 5'-phosphate and a 3'-hydroxyl group; requires a central core of homology in the junction. The consensus cleavage sequence is 5'-(A/T)TT(C/G)-3'. Cleavage occurs on the 3'-side of the TT dinucleotide at the point of strand exchange. HJ branch migration catalyzed by RuvA-RuvB allows RuvC to scan DNA until it finds its consensus sequence, where it cleaves and resolves the cruciform DNA. The chain is Crossover junction endodeoxyribonuclease RuvC from Chlorobaculum parvum (strain DSM 263 / NCIMB 8327) (Chlorobium vibrioforme subsp. thiosulfatophilum).